The chain runs to 98 residues: NADH-ubiquinone oxidoreductase chain 4L (98 aa).

Helical transmembrane passes span 1-21, 29-49, and 61-81; these read MPLIHINIMMAFIMSLVGLLM, ALLCLEGMMLSLFILTALLAL, and IILLVFAACEAAIGLALLVMI.

Belongs to the complex I subunit 4L family. As to quaternary structure, core subunit of respiratory chain NADH dehydrogenase (Complex I) which is composed of 45 different subunits.

It is found in the mitochondrion inner membrane. It carries out the reaction a ubiquinone + NADH + 5 H(+)(in) = a ubiquinol + NAD(+) + 4 H(+)(out). Its function is as follows. Core subunit of the mitochondrial membrane respiratory chain NADH dehydrogenase (Complex I) which catalyzes electron transfer from NADH through the respiratory chain, using ubiquinone as an electron acceptor. Part of the enzyme membrane arm which is embedded in the lipid bilayer and involved in proton translocation. The sequence is that of NADH-ubiquinone oxidoreductase chain 4L (MT-ND4L) from Kogia breviceps (Pygmy sperm whale).